The sequence spans 688 residues: Glycine--tRNA ligase beta subunit (688 aa).

This sequence belongs to the class-II aminoacyl-tRNA synthetase family. Tetramer of two alpha and two beta subunits.

The protein resides in the cytoplasm. The enzyme catalyses tRNA(Gly) + glycine + ATP = glycyl-tRNA(Gly) + AMP + diphosphate. This chain is Glycine--tRNA ligase beta subunit, found in Aliivibrio fischeri (strain MJ11) (Vibrio fischeri).